The sequence spans 224 residues: Dehydration-responsive element-binding protein 1G (224 aa).

Residues 1 to 16 (MDVSAALSSDYSSGTP) show a composition bias toward polar residues. The tract at residues 1–46 (MDVSAALSSDYSSGTPSPVAADADDGSSAYMTVSSAPPKRRAGRTK) is disordered. Positions 54–111 (VFKGVRRRNPGRWVCEVREPHGKQRIWLGTFETAEMAARAHDVAALALRGRAACLNFA) form a DNA-binding region, AP2/ERF.

This sequence belongs to the AP2/ERF transcription factor family. ERF subfamily.

The protein localises to the nucleus. In terms of biological role, transcriptional activator that binds specifically to the DNA sequence 5'-[AG]CCGAC-3'. Binding to the C-repeat/DRE element mediates high salinity- and dehydration-inducible transcription. The sequence is that of Dehydration-responsive element-binding protein 1G (DREB1G) from Oryza sativa subsp. indica (Rice).